A 742-amino-acid polypeptide reads, in one-letter code: 5-methyltetrahydropteroyltriglutamate--homocysteine methyltransferase (742 aa).

Residues 18 to 21 and Lys112 each bind 5-methyltetrahydropteroyltri-L-glutamate; that span reads REWK. Residues 420–422 and Glu473 each bind L-homocysteine; that span reads IGS. L-methionine-binding positions include 420–422 and Glu473; that span reads IGS. 5-methyltetrahydropteroyltri-L-glutamate is bound at residue Trp550. Asp588 is an L-homocysteine binding site. Residue Asp588 coordinates L-methionine. Glu594 lines the 5-methyltetrahydropteroyltri-L-glutamate pocket. The Zn(2+) site is built by His630, Cys632, and Glu654. His683 serves as the catalytic Proton donor. Cys715 lines the Zn(2+) pocket.

This sequence belongs to the vitamin-B12 independent methionine synthase family. Zn(2+) serves as cofactor.

The enzyme catalyses 5-methyltetrahydropteroyltri-L-glutamate + L-homocysteine = tetrahydropteroyltri-L-glutamate + L-methionine. Its pathway is amino-acid biosynthesis; L-methionine biosynthesis via de novo pathway; L-methionine from L-homocysteine (MetE route): step 1/1. Catalyzes the transfer of a methyl group from 5-methyltetrahydrofolate to homocysteine resulting in methionine formation. This Staphylococcus aureus (strain USA300) protein is 5-methyltetrahydropteroyltriglutamate--homocysteine methyltransferase.